The chain runs to 132 residues: Replication enhancer protein (132 aa).

The protein belongs to the geminiviridae replication enhancer protein family. In terms of assembly, homooligomer. Interacts with the replication-associated protein (REP). Interacts with host proliferating cell nuclear antigen (PCNA). Interacts with host retinoblastoma-related protein 1 (RBR1), and may thereby deregulate the host cell cycle. Oligomerization and interaction with PCNA are necessary for optimal replication enhancement.

Functionally, increases viral DNA accumulation. Enhances infectivity and symptom expression. The chain is Replication enhancer protein from Potato yellow mosaic virus (isolate Venezuela) (PYMV).